Consider the following 1032-residue polypeptide: Caspase recruitment domain-containing protein 10 (1032 aa).

Disordered stretches follow at residues 1–23, 253–276, and 481–553; these read MPGR…SEAE, RARG…EPDN, and EFPS…MSDI. The residue at position 18 (Ser-18) is a Phosphoserine. The region spanning 23–115 is the CARD domain; sequence EEDALWERIE…EHFTLLTGQE (93 aa). The stretch at 138 to 456 forms a coiled coil; it reads TEVRRLREAR…LEVQLQRAQG (319 aa). Composition is skewed to basic and acidic residues over residues 261–276 and 504–517; these read AEEK…EPDN and HNSE…KEIN.

In terms of assembly, CARD10 and BCL10 bind to each other by CARD-CARD interaction. They both participate in a complex with MALT1, where MALT1 binds to BCL10. Interacts with TMEM43; this interaction is essential for EGFR-mediated NF-kappa-B activation. As to expression, detected in adult heart, kidney and liver; lower levels in intestine, placenta, muscle and lung. Also found in fetal lung, liver and kidney.

It is found in the cytoplasm. Its function is as follows. Scaffold protein that plays an important role in mediating the activation of NF-kappa-B via BCL10 or EGFR. This chain is Caspase recruitment domain-containing protein 10 (CARD10), found in Homo sapiens (Human).